The following is a 277-amino-acid chain: Undecaprenyl-diphosphatase 2 (277 aa).

A run of 6 helical transmembrane segments spans residues 43–63 (RAMAFNIIIQLGAILAVVWEF), 87–107 (LLIAFFPAVILGVLFADTIHE), 109–129 (LFNPITVAVALVVGGIVMLWA), 183–203 (AATEFSFFLAMPTMVGAAVYS), 214–234 (SDLPVFALGFVVAFIFAMIAV), and 254–274 (IAFGLLILATWQFGWVNWTAA).

The protein belongs to the UppP family.

The protein resides in the cell inner membrane. It catalyses the reaction di-trans,octa-cis-undecaprenyl diphosphate + H2O = di-trans,octa-cis-undecaprenyl phosphate + phosphate + H(+). Functionally, catalyzes the dephosphorylation of undecaprenyl diphosphate (UPP). Confers resistance to bacitracin. This is Undecaprenyl-diphosphatase 2 from Pseudomonas fluorescens (strain Pf0-1).